The chain runs to 128 residues: Small ribosomal subunit protein uS11 (128 aa).

Belongs to the universal ribosomal protein uS11 family. As to quaternary structure, part of the 30S ribosomal subunit. Interacts with proteins S7 and S18. Binds to IF-3.

Its function is as follows. Located on the platform of the 30S subunit, it bridges several disparate RNA helices of the 16S rRNA. Forms part of the Shine-Dalgarno cleft in the 70S ribosome. The chain is Small ribosomal subunit protein uS11 from Wolbachia pipientis wMel.